Here is a 683-residue protein sequence, read N- to C-terminus: MSSESSKKRKPKVIRSDGTPTEGKRNRSDTEQEGKYYSEEAEVDLRDPGRDYELYKYTCQELQRLMAEIQDLKSKGSKDVAIEIEERRIQSCVHFMTLKKLNRLAHIRLKKGRDQTHEAKQKVDAYHLQLQNLLYEVMHLQKEITKCLEFKSKHEEIDLVSLEEFYSEAPPSISKAEITMGDPHQQTLARLDWELEQRKRLAEKYRECLSNKEKILKEIEVKRDYLSSLQPRLNSIMQASLPVQEYLFMPFDQAHKQYETARHLPPPLYVLFVQATAYGQACDKTLSVAIEGSVDEAKALFKPPEDSQDDESDSDAEEEQTTKRRRPTLGVQLDDKRKEMLKRHPLSVLLDLKCKDNSVLHLTFYYLMNLNIMTVKAKVTTAVELITPISAGDLLSPDSVLSCLYPGDHGKKTPNPANQYQFDKVGILTLRDYVLELGHPYLWVQKLGGLHFPKEQPQQTVMPDHSQSASHMETTMKLLKTRVQSRLALHKQFASLEHGIVPVTSDCQDLFPAKVVSRLVKWVIITHEDYMELHFTKDIVEAGLAGDTNLYYLALIERGTAKLQAAVVLNPGYSSIPPVFRLCLNWKGEKTNSNDDNIRAMESEVNVCYKELCGPRPSHQLLTNQLQRLCVLLDVYLETESHDDSFEGPKEFPQEKMCLRLFRGPSRMKPFKYNHPQGFFSHR.

Residues M1–E42 form a disordered region. N-acetylserine is present on S2. Residues S2–I144 form an interaction with CSF1R region. The interval S2–K199 is interaction with THOC7. Residues S5 and S6 each carry the phosphoserine modification. Positions K7–K10 match the Nuclear localization signal motif. Positions E22–E42 are enriched in basic and acidic residues. Residues A81–L247 adopt a coiled-coil conformation. A Glycyl lysine isopeptide (Lys-Gly) (interchain with G-Cter in SUMO2) cross-link involves residue K153. Position 225 is a phosphotyrosine (Y225). Residues L247–R683 are tandem RWD domains. The disordered stretch occupies residues F301–K336. Over residues D306–E319 the composition is skewed to acidic residues. A phosphoserine mark is found at S307, S312, and S314. Position 328 is a phosphothreonine (T328).

Belongs to the THOC5 family. Component of the THO subcomplex, which is composed of THOC1, THOC2, THOC3, THOC5, THOC6 and THOC7. The THO subcomplex interacts with DDX39B to form the THO-DDX39B complex which multimerizes into a 28-subunit tetrameric assembly. Component of the transcription/export (TREX) complex at least composed of ALYREF/THOC4, DDX39B, SARNP/CIP29, CHTOP and the THO subcomplex; in the complex interacts with THOC1, THOC2, THOC5, THOC6 and THOC7; forms a coiled-coil dimer with THOC7; together with THOC6 and THOC7, plays a key structural role in the oligomerization of the THO-DDX39B complex. TREX seems to have a dynamic structure involving ATP-dependent remodeling. Interacts (via N-terminus) with the NTF2 domain of NXF1. Interacts with phosphorylated CSF1R. Forms a complex with CEBPB. Interacts with CPSF6; indicative for an association with the cleavage factor Im (CFIm) complex. Interacts with THOC1. Interacts with LUZP4. Interacts with NCBP3. Post-translationally, phosphorylated on tyrosine upon binding to activated CSF1R; which causes a dissociation of the two proteins. Phosphorylation on Ser-5 and/or Ser-6 is required for nuclear export. Phosphorylated on Thr-328 in insulin-stimulated adipocytes. In terms of tissue distribution, ubiquitously expressed, with highest levels in testis, liver and heart.

Its subcellular location is the nucleus. It localises to the cytoplasm. Functionally, component of the THO subcomplex of the TREX complex which is thought to couple mRNA transcription, processing and nuclear export, and which specifically associates with spliced mRNA and not with unspliced pre-mRNA. Plays a key structural role in the oligomerization of the THO-DDX39B complex. TREX is recruited to spliced mRNAs by a transcription-independent mechanism, binds to mRNA upstream of the exon-junction complex (EJC) and is recruited in a splicing- and cap-dependent manner to a region near the 5' end of the mRNA where it functions in mRNA export to the cytoplasm via the TAP/NXF1 pathway. THOC5 in conjunction with ALYREF/THOC4 functions in NXF1-NXT1 mediated nuclear export of HSP70 mRNA; both proteins enhance the RNA binding activity of NXF1 and are required for NXF1 localization to the nuclear rim. Involved in transcription elongation and genome stability. Involved in alternative polyadenylation site choice by recruiting CPSF6 to 5' region of target genes; probably mediates association of the TREX and CFIm complexes. In terms of biological role, regulates the expression of myeloid transcription factors CEBPA, CEBPB and GAB2 by enhancing the levels of phosphatidylinositol 3,4,5-trisphosphate. May be involved in the differentiation of granulocytes and adipocytes. Essential for hematopoietic primitive cell survival and plays an integral role in monocytic development. This is THO complex subunit 5 homolog (Thoc5) from Mus musculus (Mouse).